The chain runs to 443 residues: Cell division protein FtsA (443 aa).

This sequence belongs to the FtsA/MreB family. Self-interacts. Interacts with FtsZ.

Its subcellular location is the cell inner membrane. Functionally, cell division protein that is involved in the assembly of the Z ring. May serve as a membrane anchor for the Z ring. The sequence is that of Cell division protein FtsA from Agrobacterium fabrum (strain C58 / ATCC 33970) (Agrobacterium tumefaciens (strain C58)).